Here is a 394-residue protein sequence, read N- to C-terminus: Obg-like ATPase 1 (394 aa).

An OBG-type G domain is found at 21–285 (LKAGIVGLAN…MSPEDAEEEL (265 aa)). Residue 30 to 35 (NVGKST) coordinates ATP. Residues S34 and T55 each contribute to the Mg(2+) site. The residue at position 89 (T89) is a Phosphothreonine. Residue K98 forms a Glycyl lysine isopeptide (Lys-Gly) (interchain with G-Cter in ubiquitin) linkage. Phosphoserine is present on residues S116 and S119. Residue L233 participates in ATP binding. In terms of domain architecture, TGS spans 306 to 389 (DLISFFTCGP…EDGDIIYFRA (84 aa)).

This sequence belongs to the TRAFAC class OBG-HflX-like GTPase superfamily. OBG GTPase family. YchF/OLA1 subfamily. As to quaternary structure, monomer. Interacts with the 26S proteasome subunit RPT6. Mg(2+) serves as cofactor.

The protein resides in the cytoplasm. Functionally, hydrolyzes ATP, and can also hydrolyze GTP with lower efficiency. Has lower affinity for GTP. The chain is Obg-like ATPase 1 from Saccharomyces cerevisiae (strain ATCC 204508 / S288c) (Baker's yeast).